The following is a 150-amino-acid chain: Putative biopolymer transport protein ExbB-like 2 (150 aa).

3 consecutive transmembrane segments (helical) span residues 5–25 (VDYG…AIAI), 63–83 (APYI…MDLG), and 97–117 (LALA…AIVI).

This sequence belongs to the ExbB/TolQ family.

The protein resides in the cell inner membrane. The sequence is that of Putative biopolymer transport protein ExbB-like 2 from Helicobacter pylori (strain ATCC 700392 / 26695) (Campylobacter pylori).